Here is a 402-residue protein sequence, read N- to C-terminus: MDRTETRFRKRGQITGKITTSRQPHPQNEQSPQRSTSGYPLQEVVDDEMLGPSAPGVDPSPPCRSLGWKRKREWSDESEEEPEKELAPEPEETWVVEMLCGLKMKLKQQRVSPILPEHHKDFNSQLAPGVDPSPPHRSFCWKRKMEWWDESEESLEEEPRKVLAPEPEEIWVAEMLCGLKMKLKRRRVSLVLPEHHEAFNRLLEDPVIKRFLAWDKDLRVSDKYLLAMVIAYFSRAGFPSWQYQRIHFFLALYLANDMEEDDEDSKQNIFHFLYRKNRSRIPLLRKPWFQLGHSMNPRARKNRSRIPLLRKRRFQLYRSTNPRARKNRSRIPLLRKRRFQLYRSMNSRARKNRSQIVLFQKRRFHFFCSMSCRAWVSPEELEEIQAYDPEHWVWARDRAHLS.

The interval 1-89 (MDRTETRFRK…EEPEKELAPE (89 aa)) is disordered. Residues 16–39 (GKITTSRQPHPQNEQSPQRSTSGY) are compositionally biased toward polar residues. Positions 76–89 (DESEEEPEKELAPE) are enriched in acidic residues.

It belongs to the Speedy/Ringo family.

The protein is Speedy protein E2 (SPDYE2) of Homo sapiens (Human).